The primary structure comprises 91 residues: Putative pterin-4-alpha-carbinolamine dehydratase (91 aa).

Belongs to the pterin-4-alpha-carbinolamine dehydratase family.

The catalysed reaction is (4aS,6R)-4a-hydroxy-L-erythro-5,6,7,8-tetrahydrobiopterin = (6R)-L-erythro-6,7-dihydrobiopterin + H2O. This is Putative pterin-4-alpha-carbinolamine dehydratase from Halobacterium salinarum (strain ATCC 29341 / DSM 671 / R1).